Consider the following 60-residue polypeptide: Large ribosomal subunit protein bL32 (60 aa).

A compositionally biased stretch (basic residues) spans 1–20; that stretch reads MACPKKKTSKSKRSMRRAAW. The segment at 1–22 is disordered; the sequence is MACPKKKTSKSKRSMRRAAWKR.

The protein belongs to the bacterial ribosomal protein bL32 family.

This Thermosynechococcus vestitus (strain NIES-2133 / IAM M-273 / BP-1) protein is Large ribosomal subunit protein bL32.